The chain runs to 577 residues: uncharacterized protein (577 aa).

Polar residues-rich tracts occupy residues 1–21 (MSST…QSAS) and 68–87 (SFQN…SKTE). Disordered stretches follow at residues 1 to 24 (MSST…SAHP) and 68 to 93 (SFQN…PDDV). Transmembrane regions (helical) follow at residues 139-159 (CILA…AVPA), 174-194 (LLTM…WAPL), 204-224 (ILIG…GKDI), 232-252 (FFAG…LADM), 262-282 (ITLF…VGGF), 292-312 (WTEY…YLFC), 367-387 (PICF…YLLL), 402-422 (MGVA…GSGI), 447-467 (LPPM…LSWS), 473-493 (VNWV…LLIF), 504-526 (YLFR…AAGF), and 543-563 (GSLL…FFFF).

Belongs to the major facilitator superfamily. CAR1 family.

The protein resides in the endoplasmic reticulum. It localises to the membrane. This is an uncharacterized protein from Schizosaccharomyces pombe (strain 972 / ATCC 24843) (Fission yeast).